The following is a 322-amino-acid chain: Homoserine kinase (322 aa).

An ATP-binding site is contributed by 107–117 (PLSSGMGGSAA).

It belongs to the GHMP kinase family. Homoserine kinase subfamily.

It localises to the cytoplasm. The catalysed reaction is L-homoserine + ATP = O-phospho-L-homoserine + ADP + H(+). Its pathway is amino-acid biosynthesis; L-threonine biosynthesis; L-threonine from L-aspartate: step 4/5. Catalyzes the ATP-dependent phosphorylation of L-homoserine to L-homoserine phosphate. This is Homoserine kinase from Xylella fastidiosa (strain 9a5c).